Here is a 408-residue protein sequence, read N- to C-terminus: Glutamate N-acetyltransferase (408 aa).

Residues Thr150, Lys176, Thr189, Glu271, Asn403, and Thr408 each contribute to the substrate site. Thr189 serves as the catalytic Nucleophile.

This sequence belongs to the ArgJ family. As to quaternary structure, heterotetramer of two alpha and two beta chains.

The protein resides in the cytoplasm. The enzyme catalyses N(2)-acetyl-L-ornithine + L-glutamate = N-acetyl-L-glutamate + L-ornithine. It functions in the pathway amino-acid biosynthesis; L-arginine biosynthesis; L-ornithine and N-acetyl-L-glutamate from L-glutamate and N(2)-acetyl-L-ornithine (cyclic): step 1/1. Its function is as follows. Catalyzes the transfer of the acetyl group from N(2)-acetylornithine to glutamate, forming N-acetylglutamate and L-ornithine. In Methanococcus maripaludis (strain C5 / ATCC BAA-1333), this protein is Glutamate N-acetyltransferase.